We begin with the raw amino-acid sequence, 239 residues long: ATP synthase subunit b (239 aa).

The segment covering methionine 1–proline 22 has biased composition (low complexity). Residues methionine 1–glutamate 64 are disordered. Basic and acidic residues-rich tracts occupy residues lysine 23–glutamine 33 and glutamate 45–glutamate 64. The chain crosses the membrane as a helical span at residues serine 85–methionine 105.

The protein belongs to the ATPase B chain family. As to quaternary structure, F-type ATPases have 2 components, F(1) - the catalytic core - and F(0) - the membrane proton channel. F(1) has five subunits: alpha(3), beta(3), gamma(1), delta(1), epsilon(1). F(0) has three main subunits: a(1), b(2) and c(10-14). The alpha and beta chains form an alternating ring which encloses part of the gamma chain. F(1) is attached to F(0) by a central stalk formed by the gamma and epsilon chains, while a peripheral stalk is formed by the delta and b chains.

The protein localises to the cell inner membrane. Functionally, f(1)F(0) ATP synthase produces ATP from ADP in the presence of a proton or sodium gradient. F-type ATPases consist of two structural domains, F(1) containing the extramembraneous catalytic core and F(0) containing the membrane proton channel, linked together by a central stalk and a peripheral stalk. During catalysis, ATP synthesis in the catalytic domain of F(1) is coupled via a rotary mechanism of the central stalk subunits to proton translocation. Its function is as follows. Component of the F(0) channel, it forms part of the peripheral stalk, linking F(1) to F(0). In Koribacter versatilis (strain Ellin345), this protein is ATP synthase subunit b.